A 364-amino-acid chain; its full sequence is DNA replication and repair protein RecF (364 aa).

ATP is bound at residue G30–T37.

It belongs to the RecF family.

It localises to the cytoplasm. Its function is as follows. The RecF protein is involved in DNA metabolism; it is required for DNA replication and normal SOS inducibility. RecF binds preferentially to single-stranded, linear DNA. It also seems to bind ATP. In Sodalis glossinidius, this protein is DNA replication and repair protein RecF.